A 117-amino-acid chain; its full sequence is Hydrogenase maturation factor HypA (117 aa).

A Ni(2+)-binding site is contributed by H2. Zn(2+)-binding residues include C73, C76, C89, and C92.

This sequence belongs to the HypA/HybF family.

Its function is as follows. Involved in the maturation of [NiFe] hydrogenases. Required for nickel insertion into the metal center of the hydrogenase. This Shewanella baltica (strain OS223) protein is Hydrogenase maturation factor HypA.